Reading from the N-terminus, the 117-residue chain is Large ribosomal subunit protein bL20c (117 aa).

The protein belongs to the bacterial ribosomal protein bL20 family.

Its subcellular location is the plastid. The protein resides in the chloroplast. Functionally, binds directly to 23S ribosomal RNA and is necessary for the in vitro assembly process of the 50S ribosomal subunit. It is not involved in the protein synthesizing functions of that subunit. The protein is Large ribosomal subunit protein bL20c of Calycanthus floridus var. glaucus (Eastern sweetshrub).